The following is a 159-amino-acid chain: Putative UPF0479 protein YDR545C-A (159 aa).

The next 2 membrane-spanning stretches (helical) occupy residues 38–58 (IVFC…KVLQ) and 135–155 (VPMI…ISQH).

The protein belongs to the UPF0479 family.

Its subcellular location is the membrane. The chain is Putative UPF0479 protein YDR545C-A from Saccharomyces cerevisiae (strain ATCC 204508 / S288c) (Baker's yeast).